Here is a 467-residue protein sequence, read N- to C-terminus: UDP-N-acetylmuramoylalanine--D-glutamate ligase (467 aa).

Position 121–127 (121–127 (GTNGKST)) interacts with ATP.

The protein belongs to the MurCDEF family.

It is found in the cytoplasm. The enzyme catalyses UDP-N-acetyl-alpha-D-muramoyl-L-alanine + D-glutamate + ATP = UDP-N-acetyl-alpha-D-muramoyl-L-alanyl-D-glutamate + ADP + phosphate + H(+). Its pathway is cell wall biogenesis; peptidoglycan biosynthesis. Functionally, cell wall formation. Catalyzes the addition of glutamate to the nucleotide precursor UDP-N-acetylmuramoyl-L-alanine (UMA). This chain is UDP-N-acetylmuramoylalanine--D-glutamate ligase, found in Chelativorans sp. (strain BNC1).